Reading from the N-terminus, the 298-residue chain is N-acetylmuramic acid 6-phosphate etherase (298 aa).

The 164-residue stretch at 55–218 (IHAQVSGGGR…STGLMIKSGK (164 aa)) folds into the SIS domain. The Proton donor role is filled by E83. E114 is a catalytic residue.

Belongs to the GCKR-like family. MurNAc-6-P etherase subfamily. Homodimer.

The catalysed reaction is N-acetyl-D-muramate 6-phosphate + H2O = N-acetyl-D-glucosamine 6-phosphate + (R)-lactate. The protein operates within amino-sugar metabolism; 1,6-anhydro-N-acetylmuramate degradation. Its pathway is amino-sugar metabolism; N-acetylmuramate degradation. It functions in the pathway cell wall biogenesis; peptidoglycan recycling. Its function is as follows. Specifically catalyzes the cleavage of the D-lactyl ether substituent of MurNAc 6-phosphate, producing GlcNAc 6-phosphate and D-lactate. Together with AnmK, is also required for the utilization of anhydro-N-acetylmuramic acid (anhMurNAc) either imported from the medium or derived from its own cell wall murein, and thus plays a role in cell wall recycling. This is N-acetylmuramic acid 6-phosphate etherase from Escherichia coli O17:K52:H18 (strain UMN026 / ExPEC).